The sequence spans 145 residues: Immune protein Tsi4 (145 aa).

The next 2 membrane-spanning stretches (helical) occupy residues 9–29 (IGGL…LLAG) and 109–129 (ALWG…IVGF).

The protein localises to the membrane. Functionally, immunity protein that plays a role in preventing early activation of toxin Tse4. The protein is Immune protein Tsi4 of Pseudomonas aeruginosa (strain ATCC 15692 / DSM 22644 / CIP 104116 / JCM 14847 / LMG 12228 / 1C / PRS 101 / PAO1).